The following is a 190-amino-acid chain: MNGATVQPSYKEAGPVRYHPMHDCLSLILRLLTLGATIAAIVAMLKSTQTVPTLLGPHTARWKDFPAFEWFVIGNSIVLVYAALGTLAACLSLFTRRGPLSYTKTAWLTFLCDFICSCALISAGSTALGVAWIGKHGQHSAFWNAVCPTVDRFCDYVQGALIATLCGFIFQALSTVIAASALHNLATHRH.

Residues 1–24 lie on the Cytoplasmic side of the membrane; it reads MNGATVQPSYKEAGPVRYHPMHDC. A helical transmembrane segment spans residues 25-45; it reads LSLILRLLTLGATIAAIVAML. Topologically, residues 46 to 70 are extracellular; the sequence is KSTQTVPTLLGPHTARWKDFPAFEW. The chain crosses the membrane as a helical span at residues 71 to 91; it reads FVIGNSIVLVYAALGTLAACL. Residues 92–113 are Cytoplasmic-facing; it reads SLFTRRGPLSYTKTAWLTFLCD. A helical membrane pass occupies residues 114-134; that stretch reads FICSCALISAGSTALGVAWIG. Residues 135-158 lie on the Extracellular side of the membrane; it reads KHGQHSAFWNAVCPTVDRFCDYVQ. A helical transmembrane segment spans residues 159 to 179; the sequence is GALIATLCGFIFQALSTVIAA. Over 180–190 the chain is Cytoplasmic; the sequence is SALHNLATHRH.

The protein belongs to the Casparian strip membrane proteins (CASP) family. As to quaternary structure, homodimer and heterodimers.

The protein localises to the cell membrane. The protein is CASP-like protein 1U3 of Physcomitrium patens (Spreading-leaved earth moss).